Here is a 309-residue protein sequence, read N- to C-terminus: MVKIYAPASIGNVSVGFDVLGAAVSPIDGTLLGDCVSVTAAERFSLHNEGRFVSKLPDDPKQNIVYQCWERFCQEMGKEIPVAMVLEKNMPIGSGLGSSACSVVAGLMAMNEFCGQPLDKVTLLGMMGELEGRVSGSIHFDNVAPCYLGGMQLILEQEGYISQDVPGFSDWLWVMAYPGIKVSTAEARAILPAQYRRQDCITHGRNLAGFIHACHTQQPDLAAKMMKDVIAEPYRTQLLPGFAAARQAAQDIGALACGISGSGPTLFAVCNDQATAQRMAGWLQNHYLQNDEGFVHICRLDTAGARLLG.

P91–C101 lines the ATP pocket.

Belongs to the GHMP kinase family. Homoserine kinase subfamily.

The protein localises to the cytoplasm. It carries out the reaction L-homoserine + ATP = O-phospho-L-homoserine + ADP + H(+). The protein operates within amino-acid biosynthesis; L-threonine biosynthesis; L-threonine from L-aspartate: step 4/5. In terms of biological role, catalyzes the ATP-dependent phosphorylation of L-homoserine to L-homoserine phosphate. The sequence is that of Homoserine kinase from Yersinia pseudotuberculosis serotype O:1b (strain IP 31758).